Here is a 355-residue protein sequence, read N- to C-terminus: IGF-like family receptor 1 (355 aa).

An N-terminal signal peptide occupies residues 1 to 22; it reads MGPGRCLLTALLLLALAPPPEA. Topologically, residues 23–163 are extracellular; it reads SQYCGRLEYW…PQQAWPNFLP (141 aa). Residues 120–147 are disordered; it reads KGHCPLTPGNPGAPSSQERSSPASSIAW. The span at 132-144 shows a compositional bias: low complexity; sequence APSSQERSSPASS. The helical transmembrane segment at 164 to 184 threads the bilayer; the sequence is LVVLVLLLTLAVIAILLFILL. At 185-355 the chain is on the cytoplasmic side; that stretch reads WHLCWPKEKA…KLGSSGVCWA (171 aa).

It is found in the cell membrane. Probable cell membrane receptor for the IGF-like family proteins. Binds IGFL1 and IGFL3 with a higher affinity. May also bind IGFL2. This chain is IGF-like family receptor 1 (IGFLR1), found in Homo sapiens (Human).